A 470-amino-acid polypeptide reads, in one-letter code: Glutamyl-tRNA(Gln) amidotransferase subunit A (470 aa).

Active-site charge relay system residues include Lys-71 and Ser-146. Catalysis depends on Ser-170, which acts as the Acyl-ester intermediate.

It belongs to the amidase family. GatA subfamily. In terms of assembly, heterotrimer of A, B and C subunits.

It carries out the reaction L-glutamyl-tRNA(Gln) + L-glutamine + ATP + H2O = L-glutaminyl-tRNA(Gln) + L-glutamate + ADP + phosphate + H(+). Its function is as follows. Allows the formation of correctly charged Gln-tRNA(Gln) through the transamidation of misacylated Glu-tRNA(Gln) in organisms which lack glutaminyl-tRNA synthetase. The reaction takes place in the presence of glutamine and ATP through an activated gamma-phospho-Glu-tRNA(Gln). This chain is Glutamyl-tRNA(Gln) amidotransferase subunit A, found in Akkermansia muciniphila (strain ATCC BAA-835 / DSM 22959 / JCM 33894 / BCRC 81048 / CCUG 64013 / CIP 107961 / Muc).